Here is a 642-residue protein sequence, read N- to C-terminus: Wall-associated receptor kinase-like 6 (642 aa).

Positions 1 to 28 (MKKTKTYQVFCIAALSVLTLQLINGSSA) are cleaved as a signal peptide. The Extracellular segment spans residues 29–357 (ATPPPPNSNS…PKITKPEKAS (329 aa)). Asn-37, Asn-72, Asn-95, Asn-137, Asn-216, Asn-240, and Asn-276 each carry an N-linked (GlcNAc...) asparagine glycan. The tract at residues 289–346 (CSCEYDYFSGMSYRICYCNYGYTGNPYLRHGCIDIDECEGHHNCGEGTCVNMPGTHSC) is atypical EGF-like. 3 disulfides stabilise this stretch: Cys-291-Cys-304, Cys-326-Cys-337, and Cys-332-Cys-346. Residues 358-378 (VLQGVLISLGVLLFVLGILGL) traverse the membrane as a helical segment. Residues 379–642 (YKFIKKRTRI…KPLSRKRIGN (264 aa)) lie on the Cytoplasmic side of the membrane. The Protein kinase domain maps to 432–642 (FSMNRVLGQG…KPLSRKRIGN (211 aa)). Residues 438–446 (LGQGGQGTV) and Lys-460 contribute to the ATP site. Tyr-505 carries the post-translational modification Phosphotyrosine. The Proton acceptor role is filled by Asp-559. Residues Thr-593 and Thr-598 each carry the phosphothreonine modification. Phosphotyrosine is present on Tyr-606.

It belongs to the protein kinase superfamily. Ser/Thr protein kinase family. In terms of tissue distribution, slightly expressed in the whole plant.

The protein resides in the membrane. The enzyme catalyses L-seryl-[protein] + ATP = O-phospho-L-seryl-[protein] + ADP + H(+). The catalysed reaction is L-threonyl-[protein] + ATP = O-phospho-L-threonyl-[protein] + ADP + H(+). In terms of biological role, serine/threonine-protein kinase that may function as a signaling receptor of extracellular matrix component. This is Wall-associated receptor kinase-like 6 (WAKL6) from Arabidopsis thaliana (Mouse-ear cress).